Reading from the N-terminus, the 254-residue chain is Serotonin N-acetyltransferase 1, chloroplastic (254 aa).

A chloroplast-targeting transit peptide spans 1 to 74; the sequence is MAPAASASAS…LRSGFLKSNN (74 aa). Residues 111–254 form the N-acetyltransferase domain; sequence IIFSSAGDVN…IKGMFWYPRF (144 aa).

The protein belongs to the acetyltransferase family. Expressed in roots and shoots.

The protein resides in the plastid. It is found in the chloroplast. The protein localises to the nucleus. The catalysed reaction is serotonin + acetyl-CoA = N-acetylserotonin + CoA + H(+). It catalyses the reaction tyramine + acetyl-CoA = N-acetyltyramine + CoA + H(+). The enzyme catalyses tryptamine + acetyl-CoA = N-acetyltryptamine + CoA + H(+). It carries out the reaction 5-methoxytryptamine + acetyl-CoA = melatonin + CoA + H(+). Its pathway is aromatic compound metabolism; melatonin biosynthesis; melatonin from serotonin: step 1/2. Functionally, catalyzes the N-acetylation of serotonin into N-acetylserotonin, the penultimate step in the synthesis of melatonin. Catalyzes in vitro the N-acetylation of tryptamine to produce N-acetyltryptamine, 5-methoxytryptamine to produce melatonin and tyramine to produce N-acetyltyramine. This is Serotonin N-acetyltransferase 1, chloroplastic from Oryza sativa subsp. japonica (Rice).